The primary structure comprises 451 residues: Medium-chain fatty acid ethyl ester synthase/esterase 2 (451 aa).

Lys114 participates in a covalent cross-link: Glycyl lysine isopeptide (Lys-Gly) (interchain with G-Cter in ubiquitin). The AB hydrolase-1 domain maps to 166 to 430 (PLVVILHGLA…GGHLAYLDKD (265 aa)). Active-site charge relay system residues include Ser247, Asp395, and His423.

Belongs to the AB hydrolase superfamily. AB hydrolase 4 family.

The catalysed reaction is an aliphatic alcohol + acetyl-CoA = an acetyl ester + CoA. In terms of biological role, displays enzymatic activity both for medium-chain fatty acid (MCFA) ethyl ester synthesis and hydrolysis (esterase activity). MCFA are toxic for yeast and this enzyme could thus be involved in their detoxification by esterification. The polypeptide is Medium-chain fatty acid ethyl ester synthase/esterase 2 (EHT1) (Saccharomyces cerevisiae (strain ATCC 204508 / S288c) (Baker's yeast)).